A 213-amino-acid polypeptide reads, in one-letter code: Adenylate kinase (213 aa).

10 to 15 (GSGKGS) is a binding site for ATP. The tract at residues 30–60 (STGNLFRAILKEDSELARKIKEINVSGGKLV) is NMP. Residues Thr31, Arg36, 58 to 60 (KLV), 87 to 90 (GYPR), and Gln94 each bind AMP. The LID stretch occupies residues 123–160 (GRWMCPKCAGIYNIHFKKPQVDGVCDNDQATLYQRADD). Arg124 lines the ATP pocket. Zn(2+) is bound by residues Cys127 and Cys130. 133–134 (IY) lines the ATP pocket. Cys147 and Asp150 together coordinate Zn(2+). Residues Arg157 and Arg168 each coordinate AMP. Position 196 (Gln196) interacts with ATP.

This sequence belongs to the adenylate kinase family. Monomer.

It localises to the cytoplasm. The catalysed reaction is AMP + ATP = 2 ADP. Its pathway is purine metabolism; AMP biosynthesis via salvage pathway; AMP from ADP: step 1/1. Catalyzes the reversible transfer of the terminal phosphate group between ATP and AMP. Plays an important role in cellular energy homeostasis and in adenine nucleotide metabolism. In Ureaplasma urealyticum serovar 10 (strain ATCC 33699 / Western), this protein is Adenylate kinase.